Reading from the N-terminus, the 267-residue chain is Hydroxyethylthiazole kinase (267 aa).

M42 contributes to the substrate binding site. ATP-binding residues include R118 and S164. Residue A191 coordinates substrate.

The protein belongs to the Thz kinase family. Mg(2+) serves as cofactor.

It carries out the reaction 5-(2-hydroxyethyl)-4-methylthiazole + ATP = 4-methyl-5-(2-phosphooxyethyl)-thiazole + ADP + H(+). It participates in cofactor biosynthesis; thiamine diphosphate biosynthesis; 4-methyl-5-(2-phosphoethyl)-thiazole from 5-(2-hydroxyethyl)-4-methylthiazole: step 1/1. Catalyzes the phosphorylation of the hydroxyl group of 4-methyl-5-beta-hydroxyethylthiazole (THZ). This is Hydroxyethylthiazole kinase from Pasteurella multocida (strain Pm70).